The sequence spans 191 residues: Ribonuclease HII (191 aa).

One can recognise an RNase H type-2 domain in the interval 7 to 191; sequence ILMAGVDEVG…YSPVADLISK (185 aa). A divalent metal cation contacts are provided by Asp-13, Glu-14, and Asp-103.

Belongs to the RNase HII family. It depends on Mn(2+) as a cofactor. The cofactor is Mg(2+).

Its subcellular location is the cytoplasm. The enzyme catalyses Endonucleolytic cleavage to 5'-phosphomonoester.. Endonuclease that specifically degrades the RNA of RNA-DNA hybrids. In Legionella pneumophila (strain Paris), this protein is Ribonuclease HII.